The primary structure comprises 656 residues: MASTASVSTSTASSELSSLSNNINNAADISVIVIYFVVVMAVGVWAMLKTNRSTVGGFFLAGRSMTWWPMGASLFASNIGSGHFVGLAGTGAASGIAVTAFESHSFALLLVLGWIFVPIYIKAGVMTMPEYLKKRFGGKRLQIYLSILFLFICVILTISADIFSGAIFIKLALGLNLYLAILILLAITAIFTITGGLASVIYTDTVQAVIMLVGSFILMVFAFVEVGGYESFTEKFMNAIPSVVEGDNLTINSRCYTPQPDSFHIFRDPVTGDIPWPGTAFGMPITALWYWCINQVIVQRCLCGKNLSHVKAACILCGYLKLLPLFFMVMPGMISRILYTDMVACVVPSECVKHCGVDVGCTNYAYPMLVLKLMPMGLRGLMLSVMLASLMSSLTSVFNSASTLFTIDLYTKIRKKASERELLIAGRLFVSVLIVTSILWVPIVEVSQGGQLVHYTEAISSYLGPPIAAVFLVAVFCKRANEQGAFWGLMVGLVMGLIRMIAEFSYGTGSCLAPSSCPKIICGVHYLYFAIILFFVCILVILGVSYLTKPIPDVHLHRLCWALRNSKEERIDLDAEDKEENGADDRTEEDQTEKPRGCLKKTCDLFCGLQRAEFKLTKVEEEALTDTTEKPFWRTVMNVNVILLLAVAAFFYGYFA.

Residues 1–28 lie on the Cytoplasmic side of the membrane; the sequence is MASTASVSTSTASSELSSLSNNINNAAD. A helical transmembrane segment spans residues 29–47; the sequence is ISVIVIYFVVVMAVGVWAM. Over 48 to 64 the chain is Extracellular; that stretch reads LKTNRSTVGGFFLAGRS. The helical transmembrane segment at 65 to 85 threads the bilayer; that stretch reads MTWWPMGASLFASNIGSGHFV. The Cytoplasmic portion of the chain corresponds to 86–105; that stretch reads GLAGTGAASGIAVTAFESHS. Residues 106 to 126 traverse the membrane as a helical segment; sequence FALLLVLGWIFVPIYIKAGVM. The Extracellular segment spans residues 127 to 171; sequence TMPEYLKKRFGGKRLQIYLSILFLFICVILTISADIFSGAIFIKL. The helical transmembrane segment at 172 to 191 threads the bilayer; the sequence is ALGLNLYLAILILLAITAIF. At 192–208 the chain is on the cytoplasmic side; the sequence is TITGGLASVIYTDTVQA. The helical transmembrane segment at 209–229 threads the bilayer; that stretch reads VIMLVGSFILMVFAFVEVGGY. Over 230–270 the chain is Extracellular; that stretch reads ESFTEKFMNAIPSVVEGDNLTINSRCYTPQPDSFHIFRDPV. Asn248 is a glycosylation site (N-linked (GlcNAc...) asparagine). The chain crosses the membrane as a helical span at residues 271–291; sequence TGDIPWPGTAFGMPITALWYW. Over 292 to 314 the chain is Cytoplasmic; sequence CINQVIVQRCLCGKNLSHVKAAC. A helical membrane pass occupies residues 315–334; that stretch reads ILCGYLKLLPLFFMVMPGMI. The Extracellular segment spans residues 335-423; the sequence is SRILYTDMVA…RKKASERELL (89 aa). A helical transmembrane segment spans residues 424 to 443; sequence IAGRLFVSVLIVTSILWVPI. At 444-455 the chain is on the cytoplasmic side; sequence VEVSQGGQLVHY. The helical transmembrane segment at 456-476 threads the bilayer; sequence TEAISSYLGPPIAAVFLVAVF. Over 477–526 the chain is Extracellular; sequence CKRANEQGAFWGLMVGLVMGLIRMIAEFSYGTGSCLAPSSCPKIICGVHY. A helical membrane pass occupies residues 527–547; the sequence is LYFAIILFFVCILVILGVSYL. Over 548–634 the chain is Cytoplasmic; it reads TKPIPDVHLH…TDTTEKPFWR (87 aa). The disordered stretch occupies residues 574–593; sequence DAEDKEENGADDRTEEDQTE. A helical transmembrane segment spans residues 635–655; the sequence is TVMNVNVILLLAVAAFFYGYF.

It belongs to the sodium:solute symporter (SSF) (TC 2.A.21) family. In terms of tissue distribution, expressed in small intestine. Expressed in kidney.

Its subcellular location is the cell membrane. With respect to regulation, not inhibited by phlorizin. Its function is as follows. Does not function as sodium/D-glucose symporter. Generates D-glucose-induced depolarization in a pH-dependent manner, with activity in acidic conditions (pH 5) but not neutral conditions. The polypeptide is Solute carrier family 5 member 4A (Mus musculus (Mouse)).